The following is a 454-amino-acid chain: Probable diacyglycerol O-acyltransferase tgs2 (454 aa).

Histidine 139 serves as the catalytic Proton acceptor.

This sequence belongs to the long-chain O-acyltransferase family.

It catalyses the reaction an acyl-CoA + a 1,2-diacyl-sn-glycerol = a triacyl-sn-glycerol + CoA. The enzyme catalyses a long chain fatty alcohol + a fatty acyl-CoA = a wax ester + CoA. It participates in glycerolipid metabolism; triacylglycerol biosynthesis. Its function is as follows. Catalyzes the terminal and only committed step in triacylglycerol synthesis by using diacylglycerol and fatty acyl CoA as substrates. Required for storage lipid synthesis. This Mycobacterium tuberculosis (strain CDC 1551 / Oshkosh) protein is Probable diacyglycerol O-acyltransferase tgs2 (tgs2).